The primary structure comprises 342 residues: Biotin synthase (342 aa).

Residues 36-260 enclose the Radical SAM core domain; the sequence is NRIQISTLLS…MMPKSYIRLS (225 aa). [4Fe-4S] cluster is bound by residues cysteine 51, cysteine 55, and cysteine 58. [2Fe-2S] cluster is bound by residues cysteine 95, cysteine 126, cysteine 186, and arginine 258.

Belongs to the radical SAM superfamily. Biotin synthase family. As to quaternary structure, homodimer. It depends on [4Fe-4S] cluster as a cofactor. Requires [2Fe-2S] cluster as cofactor.

It carries out the reaction (4R,5S)-dethiobiotin + (sulfur carrier)-SH + 2 reduced [2Fe-2S]-[ferredoxin] + 2 S-adenosyl-L-methionine = (sulfur carrier)-H + biotin + 2 5'-deoxyadenosine + 2 L-methionine + 2 oxidized [2Fe-2S]-[ferredoxin]. Its pathway is cofactor biosynthesis; biotin biosynthesis; biotin from 7,8-diaminononanoate: step 2/2. Functionally, catalyzes the conversion of dethiobiotin (DTB) to biotin by the insertion of a sulfur atom into dethiobiotin via a radical-based mechanism. In Buchnera aphidicola subsp. Schizaphis graminum (strain Sg), this protein is Biotin synthase.